A 411-amino-acid chain; its full sequence is Probable peptidoglycan glycosyltransferase FtsW (411 aa).

At 1–40 (MLERMLPFLGRKRDKAAADLPVRVGHSAPRNSRMLEYDQN) the chain is on the cytoplasmic side. The helical transmembrane segment at 41-61 (LVWVTLLLLAYGLVMVYSATI) threads the bilayer. At 62 to 81 (SFHDSPRYAQWSPYHYFIRD) the chain is on the periplasmic side. A helical transmembrane segment spans residues 82 to 102 (LFSIAAALLASWIVVQIPMAE). At 103-109 (LQKWSMR) the chain is on the cytoplasmic side. The helical transmembrane segment at 110 to 130 (FFFLSLIGLVLVLLPHIGKDV) threads the bilayer. Residues 131–136 (NGSKRW) lie on the Periplasmic side of the membrane. The helical transmembrane segment at 137 to 157 (VVFPGGLNFQPSELVKLTALI) threads the bilayer. Residues 158–172 (YAADFMVRKQEVKQS) are Cytoplasmic-facing. A helical transmembrane segment spans residues 173 to 193 (LLKTFLPMMAVMMIVGVLLLA). Topologically, residues 194–196 (EPD) are periplasmic. A helical membrane pass occupies residues 197 to 217 (MGAFLVIASITLAILFLGGAN). Over 218-219 (GK) the chain is Cytoplasmic. A helical transmembrane segment spans residues 220-240 (LFSVFSVAVIGAFVLMIVLSP). Over 241-298 (WRRDRIFAYLNPWSESNALGSAYQLSHALIAMGRGEWFGVGLGGSIEKLHYLPEAHTD) the chain is Periplasmic. Residues 299–319 (FLLAIIGEELGLVGVGVVIFA) traverse the membrane as a helical segment. At 320–347 (FYWIVRRAFDIGRQALVLDRMYSALVAQ) the chain is on the cytoplasmic side. The helical transmembrane segment at 348–368 (GIGVWIGGQAFINIGVNLGLL) threads the bilayer. The Periplasmic segment spans residues 369–374 (PTKGLT). Residues 375-395 (LPLMSYGGSALLLNCMAIAVL) traverse the membrane as a helical segment. At 396–411 (LRVDFENRILMRGGHV) the chain is on the cytoplasmic side.

Belongs to the SEDS family. FtsW subfamily.

Its subcellular location is the cell inner membrane. It catalyses the reaction [GlcNAc-(1-&gt;4)-Mur2Ac(oyl-L-Ala-gamma-D-Glu-L-Lys-D-Ala-D-Ala)](n)-di-trans,octa-cis-undecaprenyl diphosphate + beta-D-GlcNAc-(1-&gt;4)-Mur2Ac(oyl-L-Ala-gamma-D-Glu-L-Lys-D-Ala-D-Ala)-di-trans,octa-cis-undecaprenyl diphosphate = [GlcNAc-(1-&gt;4)-Mur2Ac(oyl-L-Ala-gamma-D-Glu-L-Lys-D-Ala-D-Ala)](n+1)-di-trans,octa-cis-undecaprenyl diphosphate + di-trans,octa-cis-undecaprenyl diphosphate + H(+). It functions in the pathway cell wall biogenesis; peptidoglycan biosynthesis. Functionally, peptidoglycan polymerase that is essential for cell division. The sequence is that of Probable peptidoglycan glycosyltransferase FtsW from Thiomonas intermedia (strain K12) (Thiobacillus intermedius).